The primary structure comprises 78 residues: TP53-regulated inhibitor of apoptosis 1-A (78 aa).

A coiled-coil region spans residues 1–52 (MNSVGEECTDMKRDYDQCFNRWFAEKFLKGAGSGDPCTELFRRYRECVQKAI). One can recognise a CHCH domain in the interval 5 to 55 (GEECTDMKRDYDQCFNRWFAEKFLKGAGSGDPCTELFRRYRECVQKAIKDK). Short sequence motifs (cx9C motif) lie at residues 8–18 (CTDMKRDYDQC) and 37–47 (CTELFRRYREC). 2 disulfides stabilise this stretch: Cys8-Cys47 and Cys18-Cys37.

Belongs to the TRIAP1/MDM35 family. Monomer. Forms a complex with prelid1 in the mitochondrion intermembrane space. Interacts with prelid3a.

It localises to the mitochondrion. The protein localises to the mitochondrion intermembrane space. The enzyme catalyses a 1,2-diacyl-sn-glycero-3-phosphate(in) = a 1,2-diacyl-sn-glycero-3-phosphate(out). Its function is as follows. Involved in the modulation of the mitochondrial apoptotic pathway by ensuring the accumulation of cardiolipin (CL) in mitochondrial membranes. The triap1:prelid1 complex probably functions as a phosphatidic acid (PA) transporter across the mitochondrion intermembrane space to provide PA for cardiolipin CL synthesis in the inner membrane. Likewise, the triap1:prelid3a complex mediates the transfer of phosphatidic acid (PA) between liposomes (in vitro) and probably functions as a PA transporter across the mitochondrion intermembrane space (in vivo). Mediates cell survival by inhibiting activation of caspase-9 which prevents induction of apoptosis. Required for pronephros development; probably involved at an early stage in the formation of pronephric components derived from the somatic layer. The sequence is that of TP53-regulated inhibitor of apoptosis 1-A (triap1-a) from Xenopus laevis (African clawed frog).